Consider the following 616-residue polypeptide: GDP-Man:Man(3)GlcNAc(2)-PP-Dol alpha-1,2-mannosyltransferase (616 aa).

A topological domain (lumenal) is located at residue Met1. Residues 2-21 form a helical membrane-spanning segment; it reads GYLVVIGVIACVAYGILQVV. The Cytoplasmic segment spans residues 22 to 199; it reads STVLPRLLLV…RLIDGDYWKR (178 aa). Residues 200 to 220 constitute an intramembrane region (helical); it reads FTLIGQLFGSMVLSWEAMFEL. Over 221–460 the chain is Cytoplasmic; it reads SPDVWIDTIG…FGLNAMWNEH (240 aa). Positions 461-481 form an intramembrane region, helical; that stretch reads FGIGVVEYMSRGVIPLCHASA. The Cytoplasmic portion of the chain corresponds to 482-616; that stretch reads GPLLDIVTNW…ERRSGIEKVY (135 aa).

Belongs to the glycosyltransferase group 1 family.

It localises to the endoplasmic reticulum membrane. It carries out the reaction an alpha-D-Man-(1-&gt;3)-[alpha-D-Man-(1-&gt;6)]-beta-D-Man-(1-&gt;4)-beta-D-GlcNAc-(1-&gt;4)-alpha-D-GlcNAc-diphospho-di-trans,poly-cis-dolichol + 2 GDP-alpha-D-mannose = an alpha-D-Man-(1-&gt;2)-alpha-D-Man-(1-&gt;2)-alpha-D-Man-(1-&gt;3)-[alpha-D-Man-(1-&gt;6)]-beta-D-Man-(1-&gt;4)-beta-D-GlcNAc-(1-&gt;4)-alpha-D-GlcNAc-diphospho-di-trans,poly-cis-dolichol + 2 GDP + 2 H(+). It participates in protein modification; protein glycosylation. Functionally, GDP-Man:Man(3)GlcNAc(2)-PP-Dol alpha-1,2-mannosyltransferase that operates in the biosynthetic pathway of dolichol-linked oligosaccharides, the glycan precursors employed in protein asparagine (N)-glycosylation. The assembly of dolichol-linked oligosaccharides begins on the cytosolic side of the endoplasmic reticulum membrane and finishes in its lumen. The sequential addition of sugars to dolichol pyrophosphate produces dolichol-linked oligosaccharides containing fourteen sugars, including two GlcNAcs, nine mannoses and three glucoses. Once assembled, the oligosaccharide is transferred from the lipid to nascent proteins by oligosaccharyltransferases. Catalyzes, on the cytoplasmic face of the endoplasmic reticulum, the addition of the fourth and fifth mannose residues to the dolichol-linked oligosaccharide chain, to produce Man(5)GlcNAc(2)-PP-dolichol core oligosaccharide. The polypeptide is GDP-Man:Man(3)GlcNAc(2)-PP-Dol alpha-1,2-mannosyltransferase (ALG11) (Debaryomyces hansenii (strain ATCC 36239 / CBS 767 / BCRC 21394 / JCM 1990 / NBRC 0083 / IGC 2968) (Yeast)).